The sequence spans 271 residues: Sulfur carrier protein FdhD (271 aa).

The Cysteine persulfide intermediate role is filled by Cys114.

This sequence belongs to the FdhD family.

The protein localises to the cytoplasm. Its function is as follows. Required for formate dehydrogenase (FDH) activity. Acts as a sulfur carrier protein that transfers sulfur from IscS to the molybdenum cofactor prior to its insertion into FDH. This chain is Sulfur carrier protein FdhD, found in Agrobacterium fabrum (strain C58 / ATCC 33970) (Agrobacterium tumefaciens (strain C58)).